A 37-amino-acid polypeptide reads, in one-letter code: Large ribosomal subunit protein bL36c (37 aa).

This sequence belongs to the bacterial ribosomal protein bL36 family.

The protein resides in the plastid. Its subcellular location is the chloroplast. The polypeptide is Large ribosomal subunit protein bL36c (Coffea arabica (Arabian coffee)).